The primary structure comprises 353 residues: MTSSTLSQPIKQRGWFDVLDDWIKRDRFVFVGWSGLLLFPTAYLALGGWLTGTTFVTSWYTHGLASSYLEGANFLTAAVSTPADAMGHSLLLLWGPESQGDIVRWFQLGGLWTFVALHGAFSLIGFMLRQFEISRLVGIRPYNAIAFSGPIAVFVSVFLMYPLGQSSWFFAPSFGVAAIFRFLLFLQGFHNWTLNPFHMMGVAGILGGALLCAIHGATVENTLYEDGEQSNTFKAFEPTQEEETYSMVTANRYWSQIFGIAFSNKRWLHFFMLFVPVMGLWTSSIGIIGLALNLRAYDFVSQEIRAAEDPEFETFYTKNILLNEGLRAWMAPVDQPHENFVFPEEVLPRGNAL.

A helical transmembrane segment spans residues 41–61 (TAYLALGGWLTGTTFVTSWYT). H118 contacts chlorophyll a. A helical membrane pass occupies residues 125-141 (GFMLRQFEISRLVGIRP). Residues Q130 and N143 each coordinate pheophytin a. A helical transmembrane segment spans residues 153–166 (VFVSVFLMYPLGQS). Residue H198 coordinates chlorophyll a. The chain crosses the membrane as a helical span at residues 208-228 (GALLCAIHGATVENTLYEDGE). Residues H215 and F262 each contribute to the a plastoquinone site. Fe cation is bound at residue H215. H269 contributes to the Fe cation binding site. A helical membrane pass occupies residues 279-295 (GLWTSSIGIIGLALNLR).

The protein belongs to the reaction center PufL/M/PsbA/D family. As to quaternary structure, PSII is composed of 1 copy each of membrane proteins PsbA, PsbB, PsbC, PsbD, PsbE, PsbF, PsbH, PsbI, PsbJ, PsbK, PsbL, PsbM, PsbT, PsbX, PsbY, PsbZ, Psb30/Ycf12, peripheral proteins PsbO, CyanoQ (PsbQ), PsbU, PsbV and a large number of cofactors. It forms dimeric complexes. The cofactor is The D1/D2 heterodimer binds P680, chlorophylls that are the primary electron donor of PSII, and subsequent electron acceptors. It shares a non-heme iron and each subunit binds pheophytin, quinone, additional chlorophylls, carotenoids and lipids. There is also a Cl(-1) ion associated with D1 and D2, which is required for oxygen evolution. The PSII complex binds additional chlorophylls, carotenoids and specific lipids..

Its subcellular location is the host cellular thylakoid membrane. The enzyme catalyses 2 a plastoquinone + 4 hnu + 2 H2O = 2 a plastoquinol + O2. Functionally, photosystem II (PSII) is a light-driven water:plastoquinone oxidoreductase that uses light energy to abstract electrons from H(2)O, generating O(2) and a proton gradient subsequently used for ATP formation. It consists of a core antenna complex that captures photons, and an electron transfer chain that converts photonic excitation into a charge separation. The D1/D2 (PsbA/PsbD) reaction center heterodimer binds P680, the primary electron donor of PSII as well as several subsequent electron acceptors. D2 is needed for assembly of a stable PSII complex. This Synechococcus phage S-PM2 protein is Photosystem II D2 protein (psbD).